We begin with the raw amino-acid sequence, 470 residues long: Velvet complex subunit B (470 aa).

Disordered stretches follow at residues Met1–Thr148 and Val223–Phe321. The segment covering Pro15 to Gln37 has biased composition (low complexity). Over residues His38–Thr49 the composition is skewed to pro residues. A compositionally biased stretch (basic residues) spans His74–Ser86. Residues Asn102–Glu124 are compositionally biased toward pro residues. The region spanning Gly147–Arg452 is the Velvet domain. Over residues Gly232 to Ser241 the composition is skewed to low complexity. Over residues Thr242–Leu255 the composition is skewed to polar residues. Low complexity predominate over residues Gln280–Tyr301. Positions Gly307–Asn318 are enriched in polar residues.

This sequence belongs to the velvet family. VelB subfamily. As to quaternary structure, component of the heterotrimeric velvet complex composed of laeA, veA and velB; VeA acting as a bridging protein between laeA and velB. Forms a heterodimeric complex with vosA; the formation of the velB-vosA complex is light-dependent.

It localises to the nucleus. It is found in the cytoplasm. Functionally, component of the velvet transcription factor complex that controls sexual/asexual developmental ratio in response to light, promoting sexual development in the darkness while stimulating asexual sporulation under illumination. The velvet complex acts as a global regulator for secondary metabolite gene expression. Component of the velB-VosA heterodimeric complex that plays a dual role in activating genes associated with spore maturation and repressing certain development-associated genes. The complex binds DNA through the DNA-binding domain of vosA that recognizes an 11-nucleotide consensus sequence 5'-CTGGCCGCGGC-3' consisting of two motifs in the promoters of key developmental regulatory genes. Controls the expression of the pink pigment aurofusarin and the mycotoxin deoxynivalenol gene clusters. Regulates hyphae formation, hyphal hydrophobicity and conidiation. Regulates of cell wall integrity and pathogenicity. The chain is Velvet complex subunit B from Gibberella zeae (strain ATCC MYA-4620 / CBS 123657 / FGSC 9075 / NRRL 31084 / PH-1) (Wheat head blight fungus).